Here is an 861-residue protein sequence, read N- to C-terminus: ToMV susceptible protein tm-2 (861 aa).

Residues 63–83 (VKNLLKDIQELAGDVEDLLDD) are a coiled coil. One can recognise an NB-ARC domain in the interval 162 to 388 (DDFNMLQAKL…LESMGHKVQD (227 aa)). 185-192 (GMPGLGKT) contributes to the ATP binding site. LRR repeat units follow at residues 225–248 (LDIAKQIGLTEQKIKENLEDNLRS), 305–327 (LHALQPLESEKSFELFTKKIFNF), 388–411 (DGCAKVLALSYNDLPIASRPCFLY), 449–472 (LAEDVLNDLVSRNLIQLAKRTYNG), 510–536 (VARLRRITFYSDNVMIEFFGSNPKLEK), 585–608 (MTCLRYLKLEGNICGKLPNSIVKL), 609–631 (TRLETIDIDRRSLIQLPSGVWES), 652–680 (ISSFYPNIYSLHPNNLQTLMWIPDKFFEP), 689–713 (LRKLGILGVSNSTVKILSTCRPVPK), 735–758 (YPKIVKLHLNVDRTIALNSEAFPP), 781–804 (LPKLRKLKMVICKYNEEKMALSGE), and 810–835 (FPQLEVLHIHSPNGLSEVTCTDDVSM).

The protein belongs to the disease resistance NB-LRR family. As to quaternary structure, (Microbial infection) Fails to interact with the tobamovirus mouvement protein of tobacco mosaic virus (TMV).

It localises to the cell membrane. Its function is as follows. Potential inhibitor of viral mouvements which may confer resistance to some tobamoviruses but not to the tomato mosaic virus (ToMV) and tobacco mosaic virus (TMV). This chain is ToMV susceptible protein tm-2, found in Solanum lycopersicum (Tomato).